Reading from the N-terminus, the 380-residue chain is Lipid-A-disaccharide synthase (380 aa).

This sequence belongs to the LpxB family.

The enzyme catalyses a lipid X + a UDP-2-N,3-O-bis[(3R)-3-hydroxyacyl]-alpha-D-glucosamine = a lipid A disaccharide + UDP + H(+). It functions in the pathway bacterial outer membrane biogenesis; LPS lipid A biosynthesis. Its function is as follows. Condensation of UDP-2,3-diacylglucosamine and 2,3-diacylglucosamine-1-phosphate to form lipid A disaccharide, a precursor of lipid A, a phosphorylated glycolipid that anchors the lipopolysaccharide to the outer membrane of the cell. The polypeptide is Lipid-A-disaccharide synthase (Photobacterium profundum (strain SS9)).